The following is a 198-amino-acid chain: Nuclear transcription factor Y subunit A-4 (198 aa).

The disordered stretch occupies residues 1–47 (MTSSVHELSDNNESHAKKERPDSQTRPQVPSGRSSESIDTNSVYSEP). Over residues 7 to 23 (ELSDNNESHAKKERPDS) the composition is skewed to basic and acidic residues. Residues 24–44 (QTRPQVPSGRSSESIDTNSVY) show a composition bias toward polar residues. The short motif at 101-124 (FVNAKQYHGILRRRQSRAKLEARN) is the Subunit association domain (SAD) element. Residues 131 to 156 (KPYMHESRHLHAIRRPRGCGGRFLNA) constitute a DNA-binding region (NFYA/HAP2-type). The tract at residues 136–198 (ESRHLHAIRR…MATSGPNGRS (63 aa)) is disordered. Positions 156–166 (AKKENGDHKEE) are enriched in basic and acidic residues.

It belongs to the NFYA/HAP2 subunit family. Heterotrimeric transcription factor composed of three components, NF-YA, NF-YB and NF-YC. NF-YB and NF-YC must interact and dimerize for NF-YA association and DNA binding. In terms of tissue distribution, expressed in stems, caulines, and senescent flowers.

It is found in the nucleus. Its function is as follows. Stimulates the transcription of various genes by recognizing and binding to a CCAAT motif in promoters. The protein is Nuclear transcription factor Y subunit A-4 (NFYA4) of Arabidopsis thaliana (Mouse-ear cress).